Here is a 193-residue protein sequence, read N- to C-terminus: 3-isopropylmalate dehydratase small subunit (193 aa).

This sequence belongs to the LeuD family. LeuD type 1 subfamily. Heterodimer of LeuC and LeuD.

The catalysed reaction is (2R,3S)-3-isopropylmalate = (2S)-2-isopropylmalate. It participates in amino-acid biosynthesis; L-leucine biosynthesis; L-leucine from 3-methyl-2-oxobutanoate: step 2/4. In terms of biological role, catalyzes the isomerization between 2-isopropylmalate and 3-isopropylmalate, via the formation of 2-isopropylmaleate. This Listeria monocytogenes serotype 4b (strain CLIP80459) protein is 3-isopropylmalate dehydratase small subunit.